The sequence spans 868 residues: Leucine--tRNA ligase (868 aa).

The short motif at 42–52 is the 'HIGH' region element; the sequence is PYPSGKLHMGH. A 'KMSKS' region motif is present at residues 627 to 631; it reads KMSKS. Residue K630 coordinates ATP.

The protein belongs to the class-I aminoacyl-tRNA synthetase family.

The protein localises to the cytoplasm. It catalyses the reaction tRNA(Leu) + L-leucine + ATP = L-leucyl-tRNA(Leu) + AMP + diphosphate. The sequence is that of Leucine--tRNA ligase from Pseudomonas syringae pv. syringae (strain B728a).